The chain runs to 343 residues: Protein-glutamate methylesterase/protein-glutamine glutaminase 2 (343 aa).

A Response regulatory domain is found at 5–122 (KVLVVDDSAI…SVGDMSGQLV (118 aa)). At aspartate 56 the chain carries 4-aspartylphosphate. One can recognise a CheB-type methylesterase domain in the interval 154-343 (AETSNKVIAI…SIADEIVRMV (190 aa)). Active-site residues include serine 166, histidine 192, and aspartate 288.

It belongs to the CheB family. Post-translationally, phosphorylated by CheA. Phosphorylation of the N-terminal regulatory domain activates the methylesterase activity.

It localises to the cytoplasm. It carries out the reaction [protein]-L-glutamate 5-O-methyl ester + H2O = L-glutamyl-[protein] + methanol + H(+). The enzyme catalyses L-glutaminyl-[protein] + H2O = L-glutamyl-[protein] + NH4(+). In terms of biological role, involved in chemotaxis. Part of a chemotaxis signal transduction system that modulates chemotaxis in response to various stimuli. Catalyzes the demethylation of specific methylglutamate residues introduced into the chemoreceptors (methyl-accepting chemotaxis proteins or MCP) by CheR. Also mediates the irreversible deamidation of specific glutamine residues to glutamic acid. The protein is Protein-glutamate methylesterase/protein-glutamine glutaminase 2 of Syntrophus aciditrophicus (strain SB).